Reading from the N-terminus, the 367-residue chain is Protein-glutamate methylesterase/protein-glutamine glutaminase 2 (367 aa).

One can recognise a Response regulatory domain in the interval 3–120 (SVVVVDDSAF…SLDIVRIEND (118 aa)). Asp-54 bears the 4-aspartylphosphate mark. A disordered region spans residues 132 to 174 (RMLRTPRPVRPAPTASAPAQTAQVASAAPATAPSRPAMPATRA). The segment covering 143–174 (APTASAPAQTAQVASAAPATAPSRPAMPATRA) has biased composition (low complexity). The CheB-type methylesterase domain occupies 175 to 367 (SRPVRDVVAI…AAAIMNGLYK (193 aa)). Catalysis depends on residues Ser-187, His-214, and Asp-310.

The protein belongs to the CheB family. Post-translationally, phosphorylated by CheA. Phosphorylation of the N-terminal regulatory domain activates the methylesterase activity.

It localises to the cytoplasm. The enzyme catalyses [protein]-L-glutamate 5-O-methyl ester + H2O = L-glutamyl-[protein] + methanol + H(+). It catalyses the reaction L-glutaminyl-[protein] + H2O = L-glutamyl-[protein] + NH4(+). Its function is as follows. Involved in chemotaxis. Part of a chemotaxis signal transduction system that modulates chemotaxis in response to various stimuli. Catalyzes the demethylation of specific methylglutamate residues introduced into the chemoreceptors (methyl-accepting chemotaxis proteins or MCP) by CheR. Also mediates the irreversible deamidation of specific glutamine residues to glutamic acid. The sequence is that of Protein-glutamate methylesterase/protein-glutamine glutaminase 2 from Nitratidesulfovibrio vulgaris (strain ATCC 29579 / DSM 644 / CCUG 34227 / NCIMB 8303 / VKM B-1760 / Hildenborough) (Desulfovibrio vulgaris).